The chain runs to 326 residues: Probable cell division protein WhiA (326 aa).

Positions S275–V308 form a DNA-binding region, H-T-H motif.

This sequence belongs to the WhiA family.

Functionally, involved in cell division and chromosome segregation. The sequence is that of Probable cell division protein WhiA from Clavibacter michiganensis subsp. michiganensis (strain NCPPB 382).